A 174-amino-acid polypeptide reads, in one-letter code: Disulfide bond formation protein B (174 aa).

The Cytoplasmic segment spans residues M1–I12. The chain crosses the membrane as a helical span at residues L13–Y29. Over L30 to Y47 the chain is Periplasmic. C39 and C42 are disulfide-bonded. The chain crosses the membrane as a helical span at residues A48 to Q64. Over K65–M69 the chain is Cytoplasmic. The helical transmembrane segment at T70–A87 threads the bilayer. Residues R88 to N143 lie on the Periplasmic side of the membrane. C102 and C129 are oxidised to a cystine. Residues W144–R162 traverse the membrane as a helical segment. Residues G163–A174 are Cytoplasmic-facing.

The protein belongs to the DsbB family.

It is found in the cell inner membrane. In terms of biological role, required for disulfide bond formation in some periplasmic proteins. Acts by oxidizing the DsbA protein. In Acidovorax sp. (strain JS42), this protein is Disulfide bond formation protein B.